A 64-amino-acid polypeptide reads, in one-letter code: Phylloxin-S1 (64 aa).

Residues 1–22 (MVFLKKSLLLVLFVGLVSLSIC) form the signal peptide. The propeptide occupies 23–44 (EENKREEHEEVEENAEKAEEKR). Position 63 is a glutamine amide (Gln-63).

As to expression, expressed by the skin glands.

The protein resides in the secreted. Antimicrobial peptide against both Gram-positive and Gram-negative bacteria. This chain is Phylloxin-S1, found in Phyllomedusa sauvagei (Sauvage's leaf frog).